The following is a 355-amino-acid chain: uncharacterized protein (355 aa).

Cys-2 acts as the For GATase activity in catalysis. In terms of domain architecture, Glutamine amidotransferase type-2 spans 2-248; the sequence is CELLGICFNK…NGELMVFKNG (247 aa).

This is an uncharacterized protein from Methanocaldococcus jannaschii (strain ATCC 43067 / DSM 2661 / JAL-1 / JCM 10045 / NBRC 100440) (Methanococcus jannaschii).